Reading from the N-terminus, the 475-residue chain is Tubulin gamma chain (475 aa).

Residue 142–148 (AGGTGSG) coordinates GTP. Positions 455 to 475 (GKQVSGEGNTSGTVDSRVGAS) are disordered.

It belongs to the tubulin family.

The protein localises to the cytoplasm. It localises to the cytoskeleton. Its subcellular location is the microtubule organizing center. Its function is as follows. Tubulin is the major constituent of microtubules. The gamma chain is found at microtubule organizing centers (MTOC) such as the spindle poles, suggesting that it is involved in the minus-end nucleation of microtubule assembly. The polypeptide is Tubulin gamma chain (TUBG1) (Physcomitrium patens (Spreading-leaved earth moss)).